Consider the following 107-residue polypeptide: uncharacterized protein (107 aa).

A helical transmembrane segment spans residues 25–42; it reads LSLCSVLLSWLICAMCLW.

The protein localises to the host membrane. This is an uncharacterized protein from Galliformes (FAdV-1).